Consider the following 318-residue polypeptide: Ornithine carbamoyltransferase (318 aa).

Carbamoyl phosphate contacts are provided by residues 63-66 (STRT), Gln-90, Arg-114, and 141-144 (HPCQ). L-ornithine-binding positions include Asn-172, Asp-235, and 239–240 (SM). Residues 275–276 (CL) and Arg-303 contribute to the carbamoyl phosphate site.

This sequence belongs to the aspartate/ornithine carbamoyltransferase superfamily. OTCase family.

Its subcellular location is the cytoplasm. It catalyses the reaction carbamoyl phosphate + L-ornithine = L-citrulline + phosphate + H(+). It participates in amino-acid biosynthesis; L-arginine biosynthesis; L-arginine from L-ornithine and carbamoyl phosphate: step 1/3. Reversibly catalyzes the transfer of the carbamoyl group from carbamoyl phosphate (CP) to the N(epsilon) atom of ornithine (ORN) to produce L-citrulline. In Prochlorococcus marinus (strain SARG / CCMP1375 / SS120), this protein is Ornithine carbamoyltransferase.